Here is a 215-residue protein sequence, read N- to C-terminus: Kunitz trypsin inhibitor 2 (215 aa).

A signal peptide spans 1–23; the sequence is MKNPSVISFLIILLFAATICTHG. Cys67 and Cys114 are oxidised to a cystine. A glycan (N-linked (GlcNAc...) asparagine) is linked at Asn145.

The protein belongs to the protease inhibitor I3 (leguminous Kunitz-type inhibitor) family. Interacts with RD21A. Interacts with RD21B and RD21C. In terms of tissue distribution, expressed in vascular bundles of the carpels, the transmitting tract of the style and septum epidermis. Expressed in etiolated seedlings.

It is found in the secreted. The protein localises to the cell wall. Its subcellular location is the extracellular space. It localises to the apoplast. The protein resides in the endoplasmic reticulum. Its function is as follows. Water-soluble and chlorophyll-binding protein that probably does not function as a chloroplast chlorophyll carrier and is not involved in photosynthesis. Involved in the control of cell death in the transmitting tract and septum epidermis during flower development. Binds and inhibits the activity of the cysteine protease RD21A as a pro-death protein. May play a role in herbivore resistance activation during seedling greening. The polypeptide is Kunitz trypsin inhibitor 2 (Arabidopsis thaliana (Mouse-ear cress)).